We begin with the raw amino-acid sequence, 455 residues long: Argininosuccinate lyase (455 aa).

Belongs to the lyase 1 family. Argininosuccinate lyase subfamily.

It is found in the cytoplasm. The catalysed reaction is 2-(N(omega)-L-arginino)succinate = fumarate + L-arginine. The protein operates within amino-acid biosynthesis; L-arginine biosynthesis; L-arginine from L-ornithine and carbamoyl phosphate: step 3/3. The chain is Argininosuccinate lyase from Shewanella baltica (strain OS185).